Consider the following 436-residue polypeptide: Peptidase B (436 aa).

Residues Lys201 and Asp206 each contribute to the Mn(2+) site. The active site involves Lys213. 3 residues coordinate Mn(2+): Asp224, Asp283, and Glu285. Arg287 is a catalytic residue.

This sequence belongs to the peptidase M17 family. In terms of assembly, homohexamer. The cofactor is Mn(2+).

Its subcellular location is the cytoplasm. It catalyses the reaction Release of an N-terminal amino acid, Xaa, from a peptide or arylamide. Xaa is preferably Glu or Asp but may be other amino acids, including Leu, Met, His, Cys and Gln.. Functionally, probably plays an important role in intracellular peptide degradation. This is Peptidase B from Pectobacterium atrosepticum (strain SCRI 1043 / ATCC BAA-672) (Erwinia carotovora subsp. atroseptica).